The following is a 473-amino-acid chain: Zinc finger and SCAN domain-containing protein 21 (473 aa).

Residue Lys-27 forms a Glycyl lysine isopeptide (Lys-Gly) (interchain with G-Cter in SUMO2) linkage. Residues 45-127 (RQRFRQFGYH…TLLEDLEREL (83 aa)) enclose the SCAN box domain. The interval 127–171 (LDEPGHQVSTPPNEQKPVWEKISSSGTAKESPSSMQPQPLETSHN) is disordered. Polar residues predominate over residues 148-171 (ISSSGTAKESPSSMQPQPLETSHN). Glycyl lysine isopeptide (Lys-Gly) (interchain with G-Cter in SUMO2) cross-links involve residues Lys-221 and Lys-232. Residues 244 to 272 (LENEKGTKPPLQEAGSKKGRESVPTKPTP) are disordered. Over residues 258–272 (GSKKGRESVPTKPTP) the composition is skewed to basic and acidic residues. 7 consecutive C2H2-type zinc fingers follow at residues 277–299 (YICA…RRTH), 305–327 (YVCT…YRTH), 333–354 (YDCK…QRMH), 360–382 (YQCK…YRIH), 388–410 (YQCN…QRLH), 416–438 (YKCK…HRIH), and 444–466 (YWCH…QRVH). Lys-349 is covalently cross-linked (Glycyl lysine isopeptide (Lys-Gly) (interchain with G-Cter in SUMO2)).

Belongs to the krueppel C2H2-type zinc-finger protein family.

The protein localises to the nucleus. Its function is as follows. Strong transcriptional activator. Plays an important role in spermatogenesis; essential for the progression of meiotic prophase I in spermatocytes. The protein is Zinc finger and SCAN domain-containing protein 21 (ZSCAN21) of Gorilla gorilla gorilla (Western lowland gorilla).